Consider the following 161-residue polypeptide: uncharacterized protein (161 aa).

Residues Met1–Gly16 show a composition bias toward low complexity. 3 disordered regions span residues Met1–Leu23, Gly50–Ala91, and Arg140–Ser161.

This is an uncharacterized protein from Homo sapiens (Human).